A 229-amino-acid chain; its full sequence is ATP-dependent Clp protease proteolytic subunit 1 (229 aa).

Catalysis depends on S129, which acts as the Nucleophile. H154 is an active-site residue.

The protein belongs to the peptidase S14 family. Fourteen ClpP subunits assemble into 2 heptameric rings which stack back to back to give a disk-like structure with a central cavity, resembling the structure of eukaryotic proteasomes.

It is found in the cytoplasm. The enzyme catalyses Hydrolysis of proteins to small peptides in the presence of ATP and magnesium. alpha-casein is the usual test substrate. In the absence of ATP, only oligopeptides shorter than five residues are hydrolyzed (such as succinyl-Leu-Tyr-|-NHMec, and Leu-Tyr-Leu-|-Tyr-Trp, in which cleavage of the -Tyr-|-Leu- and -Tyr-|-Trp bonds also occurs).. Cleaves peptides in various proteins in a process that requires ATP hydrolysis. Has a chymotrypsin-like activity. Plays a major role in the degradation of misfolded proteins. This is ATP-dependent Clp protease proteolytic subunit 1 from Thermosynechococcus vestitus (strain NIES-2133 / IAM M-273 / BP-1).